The chain runs to 129 residues: Small ribosomal subunit protein uS11 (129 aa).

It belongs to the universal ribosomal protein uS11 family. Part of the 30S ribosomal subunit. Interacts with proteins S7 and S18. Binds to IF-3.

Functionally, located on the platform of the 30S subunit, it bridges several disparate RNA helices of the 16S rRNA. Forms part of the Shine-Dalgarno cleft in the 70S ribosome. This chain is Small ribosomal subunit protein uS11, found in Thermosipho africanus (strain TCF52B).